The primary structure comprises 1012 residues: Autotransporter adhesin BpaC (1012 aa).

An N-terminal signal peptide occupies residues Met1–Asn71. A surface exposed passenger domain region spans residues Asn72–Gly921. Disordered regions lie at residues Gly420–Thr746 and Glu785–Ala809. Residues Ala427–Asp442 show a composition bias toward polar residues. Over residues Asn443–Gly504 the composition is skewed to low complexity. The segment covering Asp505 to Glu519 has biased composition (polar residues). Residues Asn520 to Gly588 show a composition bias toward low complexity. Residues Asp589–Glu603 are compositionally biased toward polar residues. The segment covering Asn604–Gly630 has biased composition (low complexity). The segment covering Asp631 to Glu645 has biased composition (polar residues). Low complexity-rich tracts occupy residues Asn646–Gly700 and Thr708–Thr746. Residues Ile922–Gly959 are outer membrane translocation of the passenger domain. The tract at residues Lys960–Trp1012 is translocator domain.

It belongs to the autotransporter-2 (AT-2) (TC 1.B.40) family. As to quaternary structure, homotrimer.

It is found in the cell surface. The protein localises to the cell outer membrane. Its function is as follows. Involved in virulence. Mediates adherence to human respiratory epithelial cells. In Burkholderia mallei (strain ATCC 23344), this protein is Autotransporter adhesin BpaC.